The following is a 121-amino-acid chain: MELRDWLRVDVKAGKPLFDQLRTQVIDGVRAGALPPGTRLPTVRDLAGQLGVAANTVARAYRELESAAIVETRGRFGTFISRFDPTDAAMAAAAKEYVGVARALGLTKSDAMRYLTHVPDD.

In terms of domain architecture, HTH gntR-type spans 15 to 83; sequence KPLFDQLRTQ…GRFGTFISRF (69 aa). The segment at residues 43-62 is a DNA-binding region (H-T-H motif); the sequence is VRDLAGQLGVAANTVARAYR.

The protein resides in the cytoplasm. It localises to the secreted. It is found in the cell wall. In terms of biological role, transcriptional regulator that modulates resistance to vancomycin and aminoglycosides. Negatively regulates the expression of several genes responsive to vancomycin, resulting in decreased susceptibility of bacteria to vancomycin. Negatively regulates the expression of genes encoding the ribosome binding protein Hsp, the small subunit of sulfate adenylyltransferase CysD, the L-lysine-epsilon aminotransferase LAT and the protease HtpX. Also modulates purine metabolism and aminoglycoside antibiotic resistance. Negatively regulates the expression of purine metabolism-related genes and the accumulation of purine metabolites, which affects aminoglycoside antibiotic resistance. This Mycobacterium tuberculosis (strain ATCC 25618 / H37Rv) protein is HTH-type transcriptional regulator Rv1152.